We begin with the raw amino-acid sequence, 398 residues long: Phosphoglycerate kinase (398 aa).

Substrate-binding positions include 23-25, Arg-38, 61-64, Arg-119, and Arg-152; these read DLN and HFGR. ATP-binding positions include Lys-202, Glu-324, and 354–357; that span reads GGDT.

Belongs to the phosphoglycerate kinase family. As to quaternary structure, monomer.

Its subcellular location is the cytoplasm. It catalyses the reaction (2R)-3-phosphoglycerate + ATP = (2R)-3-phospho-glyceroyl phosphate + ADP. Its pathway is carbohydrate degradation; glycolysis; pyruvate from D-glyceraldehyde 3-phosphate: step 2/5. This Rhodopseudomonas palustris (strain ATCC BAA-98 / CGA009) protein is Phosphoglycerate kinase.